Here is a 258-residue protein sequence, read N- to C-terminus: Cytochrome c oxidase subunit 2 (258 aa).

Topologically, residues 1–41 (MIVNECLFFTIALCDAAEPWQLGFQDAATPMMQGIIDLHHD) are mitochondrial intermembrane. The chain crosses the membrane as a helical span at residues 42 to 58 (ILFFLILILVFVLWILV). The Mitochondrial matrix segment spans residues 59–82 (RALWHFYYKKNPIPQRIVHGTTIE). A helical membrane pass occupies residues 83-104 (ILWTIFPSIILMFIAIPSFALL). At 105-258 (YSMDEVVVDP…VSNLFIPPTS (154 aa)) the chain is on the mitochondrial intermembrane side. Residues H187, C222, E224, C226, H230, and M233 each coordinate Cu cation. A Mg(2+)-binding site is contributed by E224.

This sequence belongs to the cytochrome c oxidase subunit 2 family. In terms of assembly, component of the cytochrome c oxidase (complex IV, CIV), a multisubunit enzyme composed of a catalytic core of 3 subunits and several supernumerary subunits. The complex exists as a monomer or a dimer and forms supercomplexes (SCs) in the inner mitochondrial membrane with ubiquinol-cytochrome c oxidoreductase (cytochrome b-c1 complex, complex III, CIII). It depends on Cu cation as a cofactor.

It is found in the mitochondrion inner membrane. It carries out the reaction 4 Fe(II)-[cytochrome c] + O2 + 8 H(+)(in) = 4 Fe(III)-[cytochrome c] + 2 H2O + 4 H(+)(out). Functionally, component of the cytochrome c oxidase, the last enzyme in the mitochondrial electron transport chain which drives oxidative phosphorylation. The respiratory chain contains 3 multisubunit complexes succinate dehydrogenase (complex II, CII), ubiquinol-cytochrome c oxidoreductase (cytochrome b-c1 complex, complex III, CIII) and cytochrome c oxidase (complex IV, CIV), that cooperate to transfer electrons derived from NADH and succinate to molecular oxygen, creating an electrochemical gradient over the inner membrane that drives transmembrane transport and the ATP synthase. Cytochrome c oxidase is the component of the respiratory chain that catalyzes the reduction of oxygen to water. Electrons originating from reduced cytochrome c in the intermembrane space (IMS) are transferred via the dinuclear copper A center (CU(A)) of subunit 2 and heme A of subunit 1 to the active site in subunit 1, a binuclear center (BNC) formed by heme A3 and copper B (CU(B)). The BNC reduces molecular oxygen to 2 water molecules using 4 electrons from cytochrome c in the IMS and 4 protons from the mitochondrial matrix. This Oenothera berteroana (Bertero's evening primrose) protein is Cytochrome c oxidase subunit 2 (COX2).